The following is a 259-amino-acid chain: Probable metal transport system ATP-binding protein TC_0339 (259 aa).

Positions 9–241 constitute an ABC transporter domain; that stretch reads WAVDDLCVNY…AIFQAYGCEL (233 aa). Position 41–48 (41–48) interacts with ATP; the sequence is GPNGAGKS.

This sequence belongs to the ABC transporter superfamily.

The protein localises to the cell inner membrane. Functionally, part of an ATP-driven transport system TC_0338/TC_0339/TC_0341/TC_0342 for a metal. Probably responsible for energy coupling to the transport system. This Chlamydia muridarum (strain MoPn / Nigg) protein is Probable metal transport system ATP-binding protein TC_0339.